Here is a 151-residue protein sequence, read N- to C-terminus: FAD synthase (151 aa).

ATP-binding positions include 21–22 (TF), 26–29 (HPGH), and aspartate 104.

This sequence belongs to the archaeal FAD synthase family. Homodimer. It depends on a divalent metal cation as a cofactor.

It catalyses the reaction FMN + ATP + H(+) = FAD + diphosphate. The protein operates within cofactor biosynthesis; FAD biosynthesis; FAD from FMN: step 1/1. In terms of biological role, catalyzes the transfer of the AMP portion of ATP to flavin mononucleotide (FMN) to produce flavin adenine dinucleotide (FAD) coenzyme. The chain is FAD synthase from Methanosarcina mazei (strain ATCC BAA-159 / DSM 3647 / Goe1 / Go1 / JCM 11833 / OCM 88) (Methanosarcina frisia).